Consider the following 110-residue polypeptide: BolA-like protein 3 (110 aa).

Belongs to the BolA/IbaG family. Interacts with NFU1.

It localises to the mitochondrion. In terms of biological role, acts as a mitochondrial iron-sulfur (Fe-S) cluster assembly factor that facilitates (Fe-S) cluster insertion into a subset of mitochondrial proteins. Probably acts together with NFU1. This is BolA-like protein 3 (BOLA3) from Bos taurus (Bovine).